The following is a 75-amino-acid chain: Peptide Ctri9610 (75 aa).

An N-terminal signal peptide occupies residues 1–22 (MNSKYLFVFLILNVIFIDLCQG). Lys41 is modified (lysine amide). Positions 42–75 (GTRRRELGSQYDYLQDFRKRELDLDDLLSKFPDY) are excised as a propeptide.

The protein belongs to the non-disulfide-bridged peptide (NDBP) superfamily. Short antimicrobial peptide (group 4) family. Expressed by the venom gland.

The protein resides in the secreted. This Chaerilus tricostatus (Scorpion) protein is Peptide Ctri9610.